Here is a 118-residue protein sequence, read N- to C-terminus: Small ribosomal subunit protein uS13 (118 aa).

The segment at 94 to 118 is disordered; the sequence is SLPLRGQRTKTNARTRKGPRKPIKK.

It belongs to the universal ribosomal protein uS13 family. In terms of assembly, part of the 30S ribosomal subunit. Forms a loose heterodimer with protein S19. Forms two bridges to the 50S subunit in the 70S ribosome.

Functionally, located at the top of the head of the 30S subunit, it contacts several helices of the 16S rRNA. In the 70S ribosome it contacts the 23S rRNA (bridge B1a) and protein L5 of the 50S subunit (bridge B1b), connecting the 2 subunits; these bridges are implicated in subunit movement. Contacts the tRNAs in the A and P-sites. The sequence is that of Small ribosomal subunit protein uS13 from Idiomarina loihiensis (strain ATCC BAA-735 / DSM 15497 / L2-TR).